We begin with the raw amino-acid sequence, 76 residues long: MARICAITGRRPVKGSIINRKGQSKKSGGIGTHVTTITKRKFRPNLQRIRVKLPNGGTKRMLVSVKALKAGLVEKA.

It belongs to the bacterial ribosomal protein bL28 family.

The chain is Large ribosomal subunit protein bL28 from Opitutus terrae (strain DSM 11246 / JCM 15787 / PB90-1).